We begin with the raw amino-acid sequence, 481 residues long: ATP synthase subunit beta, chloroplastic (481 aa).

162–169 lines the ATP pocket; it reads GGAGVGKT.

Belongs to the ATPase alpha/beta chains family. F-type ATPases have 2 components, CF(1) - the catalytic core - and CF(0) - the membrane proton channel. CF(1) has five subunits: alpha(3), beta(3), gamma(1), delta(1), epsilon(1). CF(0) has four main subunits: a(1), b(1), b'(1) and c(9-12).

It is found in the plastid. The protein localises to the chloroplast thylakoid membrane. It catalyses the reaction ATP + H2O + 4 H(+)(in) = ADP + phosphate + 5 H(+)(out). Produces ATP from ADP in the presence of a proton gradient across the membrane. The catalytic sites are hosted primarily by the beta subunits. The chain is ATP synthase subunit beta, chloroplastic from Oltmannsiellopsis viridis (Marine flagellate).